A 422-amino-acid polypeptide reads, in one-letter code: Exopolygalacturonase clone GBGE184 (422 aa).

Residues 1–31 form the signal peptide; the sequence is MANARSLVAKANNINVGSLILMALVFGSCVA. PbH1 repeat units follow at residues 200 to 226, 227 to 248, 250 to 270, 280 to 301, and 310 to 331; these read TENV…HLSN, ADNV…SVGR, SNNV…SVGS, VSGI…RIKT, and AVDI…IIDQ. Asn229 carries an N-linked (GlcNAc...) asparagine glycan. Asp241 serves as the catalytic Proton donor. A disulfide bridge connects residues Cys243 and Cys260. The N-linked (GlcNAc...) asparagine glycan is linked to Asn252. His264 is a catalytic residue. Residue Asn287 is glycosylated (N-linked (GlcNAc...) asparagine). 2 disulfide bridges follow: Cys366–Cys372 and Cys404–Cys420.

It belongs to the glycosyl hydrolase 28 family.

The protein resides in the secreted. Its subcellular location is the cell wall. The enzyme catalyses [(1-&gt;4)-alpha-D-galacturonosyl](n) + H2O = alpha-D-galacturonate + [(1-&gt;4)-alpha-D-galacturonosyl](n-1). In terms of biological role, may function in depolymerizing pectin during pollen development, germination, and tube growth. Acts as an exo-polygalacturonase. The chain is Exopolygalacturonase clone GBGE184 (PGA3) from Arabidopsis thaliana (Mouse-ear cress).